The following is a 578-amino-acid chain: Putative fatty-acid--CoA ligase fadD21 (578 aa).

The protein belongs to the ATP-dependent AMP-binding enzyme family.

In Mycobacterium bovis (strain ATCC BAA-935 / AF2122/97), this protein is Putative fatty-acid--CoA ligase fadD21 (fadD21).